A 67-amino-acid polypeptide reads, in one-letter code: Large ribosomal subunit protein uL29 (67 aa).

The protein belongs to the universal ribosomal protein uL29 family.

The protein is Large ribosomal subunit protein uL29 of Pelotomaculum thermopropionicum (strain DSM 13744 / JCM 10971 / SI).